A 384-amino-acid polypeptide reads, in one-letter code: GDP-mannose transporter (384 aa).

Residues 1-40 (MVEDKKTDDYTIEMDKMDQGSKNFEAAAPPPQPRTPPAGS) lie on the Cytoplasmic side of the membrane. A helical transmembrane segment spans residues 41 to 61 (ISNNPILPVLAYCGSSILMTV). At 62–69 (MNKYVLSG) the chain is on the lumenal side. A helical membrane pass occupies residues 70–90 (LDFNLNFFLLCVQSIVCIVAI). Residues 91–110 (QTCKSCGLITYRDFSADEAR) are Cytoplasmic-facing. Residues 111–127 (KWFPITLLLIGMIYTGS) traverse the membrane as a helical segment. Residues 128–134 (KALQFLS) are Lumenal-facing. A helical membrane pass occupies residues 135-151 (IPVYTIFKNLTIILIAY). The Cytoplasmic segment spans residues 152–160 (GEVLWFGGS). Residues 161–182 (VTGLTLFSFGLMVLSSIIAAWA) traverse the membrane as a helical segment. Topologically, residues 183-200 (DIKHAVESTGDATAKVST) are lumenal. A helical membrane pass occupies residues 201-221 (LNAGYIWMLVNCLCTSSYVLG). Residues 222-236 (MRKRIKLTNFKDFDT) lie on the Cytoplasmic side of the membrane. A helical transmembrane segment spans residues 237 to 257 (LAMFYNNLLSIPVLIVLTGLM). Residues 258-276 (EDWSSANITRNFPPADRNN) are Lumenal-facing. Asn-264 carries an N-linked (GlcNAc...) asparagine glycan. Residues 277 to 297 (IIFAMILSGLSSVFISYTSAW) form a helical membrane-spanning segment. Topologically, residues 298 to 305 (CVRVTSST) are cytoplasmic. Residues 306–326 (TYSMVGALNKLPIALSGLIFF) form a helical membrane-spanning segment. Over 327–329 (DAP) the chain is Lumenal. A helical transmembrane segment spans residues 330–350 (VTFPSVSAIVVGFVSGIVYAV). The Cytoplasmic segment spans residues 351 to 384 (AKIKQNAKPKTGVLPMSNPPVSASSQSMRDSLRS). The segment at 364-384 (LPMSNPPVSASSQSMRDSLRS) is disordered. A compositionally biased stretch (polar residues) spans 369 to 384 (PPVSASSQSMRDSLRS).

It belongs to the TPT transporter family. SLC35D subfamily. Homooligomer.

Its subcellular location is the golgi apparatus membrane. The protein resides in the cytoplasmic vesicle membrane. The protein localises to the endoplasmic reticulum membrane. Its function is as follows. Involved in the import of GDP-mannose from the cytoplasm into the Golgi lumen. This is GDP-mannose transporter (gmt1) from Aspergillus terreus (strain NIH 2624 / FGSC A1156).